The chain runs to 350 residues: UDP-N-acetylenolpyruvoylglucosamine reductase (350 aa).

Positions H24 to L195 constitute an FAD-binding PCMH-type domain. Residue R172 is part of the active site. Residue S245 is the Proton donor of the active site. E342 is an active-site residue.

It belongs to the MurB family. FAD is required as a cofactor.

It is found in the cytoplasm. The enzyme catalyses UDP-N-acetyl-alpha-D-muramate + NADP(+) = UDP-N-acetyl-3-O-(1-carboxyvinyl)-alpha-D-glucosamine + NADPH + H(+). It participates in cell wall biogenesis; peptidoglycan biosynthesis. Its function is as follows. Cell wall formation. This Xanthomonas oryzae pv. oryzae (strain PXO99A) protein is UDP-N-acetylenolpyruvoylglucosamine reductase.